The primary structure comprises 341 residues: 3-keto-steroid reductase/17-beta-hydroxysteroid dehydrogenase 7 (341 aa).

Topologically, residues 1–229 (MRKVVLITGA…VACPGTALTN (229 aa)) are extracellular. 8–15 (TGASSGIG) provides a ligand contact to NAD(+). An N-linked (GlcNAc...) asparagine glycan is attached at asparagine 37. Position 171 (serine 171) interacts with substrate. An N-linked (GlcNAc...) asparagine glycan is attached at asparagine 178. Tyrosine 193 acts as the Proton acceptor in catalysis. An N-linked (GlcNAc...) asparagine glycan is attached at asparagine 229. A helical transmembrane segment spans residues 230–250 (LTYGILPPFIWTLLMPAILLL). At 251–341 (RFFANAFTLT…NQARLSGSCL (91 aa)) the chain is on the cytoplasmic side.

Belongs to the short-chain dehydrogenases/reductases (SDR) family. ERG27 subfamily. In terms of assembly, binds to the short form of prolactin receptor. In terms of processing, phosphorylated. As to expression, highly expressed in adrenal gland, liver, lung and thymus. Expressed in breast, ovaries, pituitary gland, pregnant uterus, prostate, kidney, lymph node, small intestine, spinal cord and trachea. Weakly expressed in all other tissues tested. Expressed in eye ciliary epithelial cells and neuroendocrine cells.

The protein localises to the endoplasmic reticulum membrane. The catalysed reaction is 17beta-estradiol + NADP(+) = estrone + NADPH + H(+). It catalyses the reaction a 3beta-hydroxysteroid + NADP(+) = a 3-oxosteroid + NADPH + H(+). It carries out the reaction 3-dehydro-4alpha-methylzymosterol + NADPH + H(+) = 4alpha-methylzymosterol + NADP(+). The enzyme catalyses zymosterone + NADPH + H(+) = zymosterol + NADP(+). The catalysed reaction is 4alpha-methyl-5alpha-cholest-8-en-3-one + NADPH + H(+) = 4alpha-methyl-5alpha-cholest-8-en-3beta-ol + NADP(+). It catalyses the reaction 4alpha-methyl-5alpha-cholest-7-en-3beta-ol + NADP(+) = 4alpha-methyl-5alpha-cholest-7-en-3-one + NADPH + H(+). It carries out the reaction 5alpha-cholest-8-en-3-one + NADPH + H(+) = 5alpha-cholest-8-en-3beta-ol + NADP(+). The enzyme catalyses 5alpha-androstane-3beta,17beta-diol + NADP(+) = 17beta-hydroxy-5alpha-androstan-3-one + NADPH + H(+). The catalysed reaction is progesterone + NADPH + H(+) = 3beta-hydroxypregn-4-ene-20-one + NADP(+). The protein operates within steroid biosynthesis; estrogen biosynthesis. It functions in the pathway steroid biosynthesis; zymosterol biosynthesis; zymosterol from lanosterol: step 5/6. Its activity is regulated as follows. Estradiol 17-beta-dehydrogenase and dihydrotestosterone oxidoreductase activities are selectively inhibited by 4-methyl-4-aza-5alpha-androstane derivatives, such as 17beta-[(N-Heptyl)methylamino]-4-aza-5r-androstan-3-one and 17beta-(N-Decylformamido)-4-aza-5r-androstan-3-one. Functionally, bifunctional enzyme involved in steroid-hormone metabolism and cholesterol biosynthesis. Catalyzes the NADP(H)-dependent reduction of estrogens and androgens and regulates the biological potency of these steroids. Converts estrone (E1) to a more potent estrogen, 17beta-estradiol (E2). Converts dihydrotestosterone (DHT) to its inactive form 5a-androstane-3b,17b-diol. Converts moderately progesterone to 3beta-hydroxypregn-4-ene-20-one, leading to its inactivation. Additionally, participates in the post-squalene cholesterol biosynthesis, as a 3-ketosteroid reductase. Its function is as follows. Does not have enzymatic activities toward E1 and DHT. The protein is 3-keto-steroid reductase/17-beta-hydroxysteroid dehydrogenase 7 (HSD17B7) of Homo sapiens (Human).